Reading from the N-terminus, the 453-residue chain is Serine incorporator 1 (453 aa).

Gly2 carries the N-myristoyl glycine lipid modification. The Cytoplasmic segment spans residues Gly2 to Arg39. The chain crosses the membrane as a helical span at residues Leu40–Gly60. The Lumenal segment spans residues Met61–Lys88. The helical transmembrane segment at Ala89 to Ile109 threads the bilayer. The Cytoplasmic portion of the chain corresponds to Lys110–Asn123. A helical transmembrane segment spans residues Gly124–Pro144. Residues Glu145 to Val151 are Lumenal-facing. Residues Trp152–Ile172 traverse the membrane as a helical segment. Over Asp173–Ala197 the chain is Cytoplasmic. The chain crosses the membrane as a helical span at residues Leu198 to Val218. At Tyr219–Ala231 the chain is on the lumenal side. The helical transmembrane segment at Phe232–Ile252 threads the bilayer. Over Gln253–Ser259 the chain is Cytoplasmic. Residues Gly260–Thr280 form a helical membrane-spanning segment. The Lumenal segment spans residues Asn281–Ser309. Residues Val310 to Tyr330 traverse the membrane as a helical segment. Residues Ser331 to Ser387 lie on the Cytoplasmic side of the membrane. A Phosphoserine modification is found at Ser351. Thr352 is modified (phosphothreonine). A phosphoserine mark is found at Ser361 and Ser364. A helical transmembrane segment spans residues Phe388–Tyr408. Over Arg409–Lys426 the chain is Lumenal. Residues Ile427–Leu447 traverse the membrane as a helical segment. The Cytoplasmic portion of the chain corresponds to Thr448–Asp453.

Belongs to the TDE1 family. Interacts with SPTLC1. Highly expressed in the neuronal populations such as Purkinje cells in the cerebellum, brainstem and spinal motor neurons, locus coeruleus and raphe nuclei.

It localises to the endoplasmic reticulum membrane. Functionally, enhances the incorporation of serine into phosphatidylserine and sphingolipids. The chain is Serine incorporator 1 (Serinc1) from Mus musculus (Mouse).